A 415-amino-acid chain; its full sequence is Levansucrase LscA (415 aa).

Residues Trp-45, Asp-46, Ala-132, Arg-202, and Asp-203 each contribute to the sucrose site. The Nucleophile role is filled by Asp-46. The active-site Proton donor/acceptor is Glu-287.

The protein belongs to the glycosyl hydrolase 68 family.

The protein localises to the periplasm. It catalyses the reaction [6)-beta-D-fructofuranosyl-(2-&gt;](n) alpha-D-glucopyranoside + sucrose = [6)-beta-D-fructofuranosyl-(2-&gt;](n+1) alpha-D-glucopyranoside + D-glucose. Its function is as follows. Catalyzes the synthesis of levan, a fructose polymer, by transferring the fructosyl moiety from sucrose to a growing acceptor molecule. LscA encodes a functional enzyme in vitro, when expressed in E.coli under control of the vector-based lactose promoter (Plac), and it can restore levan production to the lscB-lscC double mutant. However, lscA is not expressed in P.savastanoi pv. glycinea PG4180 under standard conditions. It could be an ancestral Lsc variant in P.syringae. The chain is Levansucrase LscA from Pseudomonas savastanoi pv. glycinea (Pseudomonas syringae pv. glycinea).